The sequence spans 38 residues: Mu-agatoxin-Hc1c (38 aa).

4 disulfides stabilise this stretch: cysteine 3–cysteine 19, cysteine 10–cysteine 24, cysteine 18–cysteine 34, and cysteine 26–cysteine 32. Residue serine 38 is modified to Serine amide.

This sequence belongs to the neurotoxin 07 (Beta/delta-agtx) family. 02 (aga-3) subfamily. As to expression, expressed by the venom gland.

The protein resides in the secreted. Its function is as follows. Insecticidal neurotoxin that induces irreversible neuromuscular blockade in house crickets (A.domesticus). Modifies presynaptic voltage-gated sodium channels (Nav), causing them to open at the normal resting potential of the nerve. This leads to spontaneous release of neurotransmitter and repetitive action potentials in motor neurons. The sequence is that of Mu-agatoxin-Hc1c from Hololena curta (Funnel-web spider).